Consider the following 498-residue polypeptide: MSSVRFSSALARRSFAVASPPLSAPLSSSARRFLSSSSSTISSSSSSVSTRSPRSLTSASSLLSSRTASARWTGLSSLNLTQSRTMATEIPKIKVKNPVVELDGDEMTRIIWQEIREKLILPYLDVDLKYYDLGLEYRDQTDDQVTVEAAEAIKKYGVGVKCATITPDEARVEEFKLKKMWLSPNGTIRNILGGTVFREPIIIPAIPRLVPGWNKPIIIGRHAFGDQYRATDRVIPGPGKLELVYTPVNGEPETVKVYDFQGGGIAQTQYNTDESIRGFAHASFQMALLKGLPLYMSTKNTILKRYDGRFKDIFQEIYESTYQKDFEAKNLWYEHRLIDDMVAQMIKSEGGFVMALKNYDGDVQSDIVAQGFGSLGLMTSTLVTPTGEAFESEAAHGTVTRHYREHQKGRETSTNPIASIFAWTRGLIQRGKLDETPDVVTFAEELERACIEVVNDEGIMTKDLALACGRKEREAWVTTREYMAAVERRLKANLKSRL.

Residues 164–166 (TIT) and R171 each bind NADP(+). Residue T166 coordinates substrate. Residues 183–189 (SPNGTIR), R198, and R221 contribute to the substrate site. Mn(2+) is bound at residue D339. Position 347 (K347) interacts with NADP(+). D362 contacts Mn(2+). Residues 397–402 (GTVTRH) and N415 contribute to the NADP(+) site.

Belongs to the isocitrate and isopropylmalate dehydrogenases family. It depends on Mg(2+) as a cofactor. The cofactor is Mn(2+).

The protein localises to the mitochondrion. It catalyses the reaction D-threo-isocitrate + NADP(+) = 2-oxoglutarate + CO2 + NADPH. This is Isocitrate dehydrogenase [NADP], mitochondrial (icdA) from Aspergillus niger.